The chain runs to 155 residues: 2-C-methyl-D-erythritol 2,4-cyclodiphosphate synthase (155 aa).

Residues aspartate 8 and histidine 10 each contribute to the a divalent metal cation site. 4-CDP-2-C-methyl-D-erythritol 2-phosphate-binding positions include aspartate 8–histidine 10 and histidine 34–serine 35. Histidine 42 provides a ligand contact to a divalent metal cation. 4-CDP-2-C-methyl-D-erythritol 2-phosphate-binding positions include aspartate 56–glycine 58, phenylalanine 61–aspartate 65, alanine 100–alanine 106, threonine 132–glutamate 135, phenylalanine 139, and arginine 142.

This sequence belongs to the IspF family. Homotrimer. It depends on a divalent metal cation as a cofactor.

It catalyses the reaction 4-CDP-2-C-methyl-D-erythritol 2-phosphate = 2-C-methyl-D-erythritol 2,4-cyclic diphosphate + CMP. It participates in isoprenoid biosynthesis; isopentenyl diphosphate biosynthesis via DXP pathway; isopentenyl diphosphate from 1-deoxy-D-xylulose 5-phosphate: step 4/6. Involved in the biosynthesis of isopentenyl diphosphate (IPP) and dimethylallyl diphosphate (DMAPP), two major building blocks of isoprenoid compounds. Catalyzes the conversion of 4-diphosphocytidyl-2-C-methyl-D-erythritol 2-phosphate (CDP-ME2P) to 2-C-methyl-D-erythritol 2,4-cyclodiphosphate (ME-CPP) with a corresponding release of cytidine 5-monophosphate (CMP). The polypeptide is 2-C-methyl-D-erythritol 2,4-cyclodiphosphate synthase (Saccharophagus degradans (strain 2-40 / ATCC 43961 / DSM 17024)).